A 396-amino-acid polypeptide reads, in one-letter code: E3 ubiquitin-protein transferase MAEA (396 aa).

The tract at residues Met-1–Arg-124 is extracellular and involved in cell to cell contact. Residue Thr-28 is modified to Phosphothreonine. One can recognise a LisH domain in the interval Lys-121–Asp-153. The CTLH domain occupies Met-159–Asp-216. Residues Cys-314–Thr-381 form an RING-Gid-type zinc finger.

As to quaternary structure, identified in the CTLH complex that contains GID4, RANBP9 and/or RANBP10, MKLN1, MAEA, RMND5A (or alternatively its paralog RMND5B), GID8, ARMC8, WDR26 and YPEL5. Within this complex, MAEA, RMND5A (or alternatively its paralog RMND5B), GID8, WDR26, and RANBP9 and/or RANBP10 form the catalytic core, while GID4, MKLN1, ARMC8 and YPEL5 have ancillary roles. Interacts with F-actin. Post-translationally, autoubiquitinated as component of the CTLH E3 ubiquitin-protein ligase complex (in vitro).

It localises to the cytoplasm. The protein localises to the nucleus. Its subcellular location is the nucleoplasm. It is found in the nucleus matrix. The protein resides in the cell membrane. It localises to the cytoskeleton. It catalyses the reaction S-ubiquitinyl-[E2 ubiquitin-conjugating enzyme]-L-cysteine + [acceptor protein]-L-lysine = [E2 ubiquitin-conjugating enzyme]-L-cysteine + N(6)-ubiquitinyl-[acceptor protein]-L-lysine.. Core component of the CTLH E3 ubiquitin-protein ligase complex that selectively accepts ubiquitin from UBE2H and mediates ubiquitination and subsequent proteasomal degradation of the transcription factor HBP1. MAEA and RMND5A are both required for catalytic activity of the CTLH E3 ubiquitin-protein ligase complex. MAEA is required for normal cell proliferation. The CTLH E3 ubiquitin-protein ligase complex is not required for the degradation of enzymes involved in gluconeogenesis, such as FBP1. Plays a role in erythroblast enucleation during erythrocyte maturation and in the development of mature macrophages. Mediates the attachment of erythroid cell to mature macrophages; this MAEA-mediated contact inhibits erythroid cell apoptosis. Participates in erythroblastic island formation, which is the functional unit of definitive erythropoiesis. Associates with F-actin to regulate actin distribution in erythroblasts and macrophages. May contribute to nuclear architecture and cells division events. The protein is E3 ubiquitin-protein transferase MAEA (MAEA) of Pongo abelii (Sumatran orangutan).